Consider the following 236-residue polypeptide: Cell division protein FtsQ (236 aa).

The Cytoplasmic segment spans residues 1–14 (MWDNHQALNQVADW). Residues 15–37 (LFTLAGLTTIYLMVQWTIHLPLL) traverse the membrane as a helical segment. Positions 37–111 (LPLKEVHIRS…NGLDVVVEEH (75 aa)) constitute a POTRA domain. At 38–236 (PLKEVHIRSN…VSGFAARGTR (199 aa)) the chain is on the periplasmic side.

This sequence belongs to the FtsQ/DivIB family. FtsQ subfamily. Part of a complex composed of FtsB, FtsL and FtsQ.

The protein localises to the cell inner membrane. In terms of biological role, essential cell division protein. May link together the upstream cell division proteins, which are predominantly cytoplasmic, with the downstream cell division proteins, which are predominantly periplasmic. May control correct divisome assembly. The chain is Cell division protein FtsQ from Nitrosospira multiformis (strain ATCC 25196 / NCIMB 11849 / C 71).